Consider the following 267-residue polypeptide: Methyl-coenzyme M reductase II subunit gamma (267 aa).

Residue Arg123 participates in coenzyme M binding.

It belongs to the methyl-coenzyme M reductase gamma subunit family. As to quaternary structure, MCR is a hexamer of two alpha, two beta, and two gamma chains, forming a dimer of heterotrimers. Coenzyme F430 is required as a cofactor.

It carries out the reaction coenzyme B + methyl-coenzyme M = methane + coenzyme M-coenzyme B heterodisulfide. The protein operates within one-carbon metabolism; methyl-coenzyme M reduction; methane from methyl-coenzyme M: step 1/1. Its function is as follows. Component of the methyl-coenzyme M reductase (MCR) I that catalyzes the reductive cleavage of methyl-coenzyme M (CoM-S-CH3 or 2-(methylthio)ethanesulfonate) using coenzyme B (CoB or 7-mercaptoheptanoylthreonine phosphate) as reductant which results in the production of methane and the mixed heterodisulfide of CoB and CoM (CoM-S-S-CoB). This is the final step in methanogenesis. The protein is Methyl-coenzyme M reductase II subunit gamma (mrtG) of Methanothermus fervidus (strain ATCC 43054 / DSM 2088 / JCM 10308 / V24 S).